The following is a 574-amino-acid chain: Membralin (574 aa).

Residues 1–27 (MSEHAAAPGPGPNGGGGGGAAPVRGPR) are disordered. S2 carries the N-acetylserine modification. A helical transmembrane segment spans residues 69 to 89 (FFVLLKALFVLFVLAYIHIVF). An N-linked (GlcNAc...) asparagine glycan is attached at N180. Transmembrane regions (helical) follow at residues 293 to 313 (TSYL…SMLL), 337 to 357 (IAFP…MEAI), and 417 to 437 (YSSL…IYFF). 2 stretches are compositionally biased toward low complexity: residues 461-470 (LGPGTPTALP) and 491-501 (LGPSSSPAPTG). Disordered stretches follow at residues 461–515 (LGPG…GASV) and 546–574 (RRPT…PAGS).

The protein belongs to the membralin family. As to quaternary structure, interacts with ERLIN2. In terms of tissue distribution, detected in brain, spinal cord, lung, liver and kidney.

It localises to the endoplasmic reticulum membrane. Its function is as follows. May have a role in the ERAD pathway required for clearance of misfolded proteins in the endoplasmic reticulum (ER). Promotes survival of motor neurons, probably by protecting against ER stress. In Mus musculus (Mouse), this protein is Membralin (Tmem259).